Reading from the N-terminus, the 647-residue chain is Acetyl-coenzyme A synthetase (647 aa).

CoA-binding positions include 190–193 (RGGR), Thr-308, and Asn-332. Residues 384-386 (GEP), 408-413 (DTWWQT), Asp-497, and Arg-512 contribute to the ATP site. Residue Ser-520 coordinates CoA. Arg-523 is a binding site for ATP. Mg(2+)-binding residues include Val-534, His-536, and Val-539. Arg-581 contacts CoA. An N6-acetyllysine modification is found at Lys-606.

Belongs to the ATP-dependent AMP-binding enzyme family. It depends on Mg(2+) as a cofactor. Acetylated. Deacetylation by the SIR2-homolog deacetylase activates the enzyme.

It catalyses the reaction acetate + ATP + CoA = acetyl-CoA + AMP + diphosphate. In terms of biological role, catalyzes the conversion of acetate into acetyl-CoA (AcCoA), an essential intermediate at the junction of anabolic and catabolic pathways. AcsA undergoes a two-step reaction. In the first half reaction, AcsA combines acetate with ATP to form acetyl-adenylate (AcAMP) intermediate. In the second half reaction, it can then transfer the acetyl group from AcAMP to the sulfhydryl group of CoA, forming the product AcCoA. The polypeptide is Acetyl-coenzyme A synthetase (Parvibaculum lavamentivorans (strain DS-1 / DSM 13023 / NCIMB 13966)).